A 474-amino-acid chain; its full sequence is Gamma-aminobutyric acid receptor subunit beta-1 (474 aa).

Residues 1–25 form the signal peptide; the sequence is MWTVQNRESLGLLSFPVMITMVCCA. Residues 26–245 lie on the Extracellular side of the membrane; that stretch reads HSTNEPSNMS…SFRLKRNIGY (220 aa). N-linked (GlcNAc...) asparagine glycosylation occurs at N105. Residue Y122 coordinates histamine. A disulfide bridge connects residues C161 and C175. A glycan (N-linked (GlcNAc...) asparagine) is linked at N174. Residues 181-182 and T227 each bind histamine; that span reads SY. 2 residues coordinate 4-aminobutanoate: Y182 and T227. 3 helical membrane passes run 246 to 267, 271 to 293, and 305 to 327; these read FILQ…SFWI, ASAA…STHL, and AIDI…YAFV. Topologically, residues 328–451 are cytoplasmic; sequence NYIFFGKGPQ…DLTDVNSIDK (124 aa). A helical transmembrane segment spans residues 452-473; that stretch reads WSRMFFPITFSLFNVVYWLYYV.

The protein belongs to the ligand-gated ion channel (TC 1.A.9) family. Gamma-aminobutyric acid receptor (TC 1.A.9.5) subfamily. GABRB1 sub-subfamily. In terms of assembly, heteropentamer, formed by a combination of alpha (GABRA1-6), beta (GABRB1-3), gamma (GABRG1-3), delta (GABRD), epsilon (GABRE), rho (GABRR1-3), pi (GABRP) and theta (GABRQ) chains, each subunit exhibiting distinct physiological and pharmacological properties. Binds UBQLN1.

It localises to the postsynaptic cell membrane. The protein resides in the cell membrane. It carries out the reaction chloride(in) = chloride(out). Potentiated by etomidate, propofol, pregnanolone and flurazepam. Potentiated by histamine. In terms of biological role, beta subunit of the heteropentameric ligand-gated chloride channel gated by gamma-aminobutyric acid (GABA), a major inhibitory neurotransmitter in the brain. GABA-gated chloride channels, also named GABA(A) receptors (GABAAR), consist of five subunits arranged around a central pore and contain one or two GABA active binding sites located at the alpha and beta subunit interfaces, depending on subunit composition. When activated by GABA, GABAARs selectively allow the flow of chloride anions across the cell membrane down their electrochemical gradient. Chloride influx into the postsynaptic neuron following GABAAR opening decreases the neuron ability to generate a new action potential, thereby reducing nerve transmission. Beta-containing GABAARs can simultaneously bind GABA and histamine where histamine binds at the interface of two neighboring beta subunits, which may be involved in the regulation of sleep and wakefulness. This is Gamma-aminobutyric acid receptor subunit beta-1 from Homo sapiens (Human).